Here is a 64-residue protein sequence, read N- to C-terminus: Alpha-toxin Amm5 (64 aa).

Residues lysine 2–asparagine 64 enclose the LCN-type CS-alpha/beta domain. Cystine bridges form between cysteine 12–cysteine 63, cysteine 16–cysteine 36, cysteine 22–cysteine 46, and cysteine 26–cysteine 48. Asparagine amide is present on asparagine 64.

Expressed by the venom gland.

Its subcellular location is the secreted. Alpha toxins bind voltage-independently at site-3 of sodium channels (Nav) and inhibit the inactivation of the activated channels, thereby blocking neuronal transmission. The sequence is that of Alpha-toxin Amm5 from Androctonus mauritanicus mauritanicus (Scorpion).